A 116-amino-acid polypeptide reads, in one-letter code: C-C motif chemokine 6 (116 aa).

Residues 1-21 form the signal peptide; it reads MRNSKTAISFFILVAVLGSQA. 3 disulfides stabilise this stretch: Cys50–Cys73, Cys51–Cys89, and Cys60–Cys100.

This sequence belongs to the intercrine beta (chemokine CC) family. Post-translationally, the N-terminal is proteolytically cleaved by proteases associated with inflammatory responses. The processed forms CL6(22-95) and CCL6(23-95) show increase in CCR1-mediated signaling and chemotaxis assays in vitro. In terms of tissue distribution, expressed in myelopoietic bone marrow cultures stimulated by GM-CSF.

The protein resides in the secreted. Chemotactic factor that attracts mostly macrophage, but it can also attract B cells, CD4(+) lymphocytes and eosinophils. The chain is C-C motif chemokine 6 (Ccl6) from Mus musculus (Mouse).